A 481-amino-acid chain; its full sequence is Sterol 14-alpha demethylase (481 aa).

The helical transmembrane segment at 1-21 threads the bilayer; the sequence is MFIEAIVLALTALILYSVYSV. Heme is bound at residue Cys-422.

The protein belongs to the cytochrome P450 family. Heme serves as cofactor.

It localises to the membrane. The enzyme catalyses a 14alpha-methyl steroid + 3 reduced [NADPH--hemoprotein reductase] + 3 O2 = a Delta(14) steroid + formate + 3 oxidized [NADPH--hemoprotein reductase] + 4 H2O + 4 H(+). The protein operates within steroid biosynthesis; zymosterol biosynthesis; zymosterol from lanosterol: step 1/6. Catalyzes C14-demethylation of lanosterol which is critical for ergosterol biosynthesis. It transforms lanosterol into 4,4'-dimethyl cholesta-8,14,24-triene-3-beta-ol. Favors C4 dimethylated substrates, the substrate preference order is 24-methylenedihydrolanosterol &gt; 24,25-dihydrolanosterol &gt; lanosterol &gt; obtusifoliol &gt; norlanosterol. The polypeptide is Sterol 14-alpha demethylase (Trypanosoma cruzi (strain CL Brener)).